Consider the following 381-residue polypeptide: Putative glycosyltransferase EpsD (381 aa).

It belongs to the glycosyltransferase group 1 family. Glycosyltransferase 4 subfamily.

Its function is as follows. May be involved in the production of the exopolysaccharide (EPS) component of the extracellular matrix during biofilm formation. EPS is responsible for the adhesion of chains of cells into bundles. Required for biofilm maintenance. This chain is Putative glycosyltransferase EpsD (epsD), found in Bacillus subtilis (strain 168).